The sequence spans 339 residues: Cullin-associated NEDD8-dissociated protein 1, N-terminal part (339 aa).

HEAT repeat units lie at residues 5-42 (HTIQ…NPCS) and 50-87 (ASAT…RLPL).

In terms of assembly, interacts with candA-C. Interacts with unneddylated cullins culA and culD; interaction occurs only when complexed with candA-C.

The protein localises to the nucleus. Functionally, assembly factor of SCF (SKP1-CUL1-F-box protein) E3 ubiquitin ligase complexes that promotes the exchange of the substrate-recognition F-box subunit in SCF complexes, thereby playing a key role in the cellular repertoire of SCF complexes. Acts as a F-box protein exchange factor when interacting with candA-C. The chain is Cullin-associated NEDD8-dissociated protein 1, N-terminal part (candA-N) from Emericella nidulans (strain FGSC A4 / ATCC 38163 / CBS 112.46 / NRRL 194 / M139) (Aspergillus nidulans).